We begin with the raw amino-acid sequence, 42 residues long: uncharacterized protein (42 aa).

This is an uncharacterized protein from Treponema pallidum (strain Nichols).